Reading from the N-terminus, the 275-residue chain is Esterase AAEL000016 (275 aa).

Residues 1–21 are disordered; that stretch reads MMANETAAKSTKSSPTPAVEP. The span at 7–16 shows a compositional bias: polar residues; that stretch reads AAKSTKSSPT. Active-site charge relay system residues include Ser-129, Asp-187, and His-214. The tract at residues 253–275 is disordered; that stretch reads LVDDSGPAGNGVHDDDDDDDDSD. Residues 266 to 275 are compositionally biased toward acidic residues; the sequence is DDDDDDDDSD.

The protein belongs to the LovG family.

In Aedes aegypti (Yellowfever mosquito), this protein is Esterase AAEL000016.